A 184-amino-acid chain; its full sequence is DOMON domain-containing protein CBG21755 (184 aa).

A signal peptide spans 1 to 20; sequence MIVPISLLFLFLSFVPFSYS. Residues 28–145 enclose the DOMON domain; sequence EVASMSWMVK…CVNWIVVPGG (118 aa). The N-linked (GlcNAc...) asparagine glycan is linked to N49.

It is found in the secreted. The protein is DOMON domain-containing protein CBG21755 of Caenorhabditis briggsae.